The sequence spans 683 residues: C-mannosyltransferase dpy-19 (683 aa).

11 helical membrane-spanning segments follow: residues 21–41 (SLYS…VGYI), 167–187 (ITGV…LGVL), 188–208 (VSDS…NHGE), 220–240 (ESFA…VIKY), 267–287 (FAFF…LIPF), 298–318 (IISF…ITAL), 319–339 (YFPS…LSNL), 344–364 (AYVL…KIGL), 413–433 (CGTL…FNFV), 467–487 (FLIM…AALF), and 502–522 (IRVS…IPNI).

This sequence belongs to the dpy-19 family. In terms of tissue distribution, expressed faintly in neuroblasts QL and QR, more strongly in the neighboring epidermal cells (dorsal hyp7 cells, ventral P cells and lateral V cells), and in dorsal and ventral body muscle cells.

The protein resides in the endoplasmic reticulum membrane. Its function is as follows. C-mannosyltransferase that mediates C-mannosylation of tryptophan residues on target proteins such as unc-5 and mig-21. Mediates the attachment of alpha-mannose in C-C linkage to the C2 of the indole ring of tryptophan. C-mannosylation takes place in the endoplasmic reticulum and frequently found in thrombospondin (TSP) type-1 repeats and in the WSXWS motif of type I cytokine receptors. Required to orient neuroblasts QL and QR correctly on the anterior/posterior (A/P) axis: QL and QR are born in the same A/P position, but polarize and migrate left/right asymmetrically, QL migrates toward the posterior and QR migrates toward the anterior. Required with unc-40 to express mab-5 correctly in the Q cell descendants. The chain is C-mannosyltransferase dpy-19 (dpy-19) from Caenorhabditis elegans.